Consider the following 98-residue polypeptide: Aspartyl/glutamyl-tRNA(Asn/Gln) amidotransferase subunit C (98 aa).

Belongs to the GatC family. Heterotrimer of A, B and C subunits.

It carries out the reaction L-glutamyl-tRNA(Gln) + L-glutamine + ATP + H2O = L-glutaminyl-tRNA(Gln) + L-glutamate + ADP + phosphate + H(+). The enzyme catalyses L-aspartyl-tRNA(Asn) + L-glutamine + ATP + H2O = L-asparaginyl-tRNA(Asn) + L-glutamate + ADP + phosphate + 2 H(+). Functionally, allows the formation of correctly charged Asn-tRNA(Asn) or Gln-tRNA(Gln) through the transamidation of misacylated Asp-tRNA(Asn) or Glu-tRNA(Gln) in organisms which lack either or both of asparaginyl-tRNA or glutaminyl-tRNA synthetases. The reaction takes place in the presence of glutamine and ATP through an activated phospho-Asp-tRNA(Asn) or phospho-Glu-tRNA(Gln). This Kocuria rhizophila (strain ATCC 9341 / DSM 348 / NBRC 103217 / DC2201) protein is Aspartyl/glutamyl-tRNA(Asn/Gln) amidotransferase subunit C.